A 171-amino-acid polypeptide reads, in one-letter code: Nudix hydrolase DR_0079 (171 aa).

Positions 32-162 (ERVRVVNAFL…EAAKGDLAEL (131 aa)) constitute a Nudix hydrolase domain. Positions 69 to 91 (GGAVQSGETYEEAFRREAREELN) match the Nudix box motif. Residues glutamate 85 and glutamate 89 each contribute to the Mg(2+) site.

It belongs to the Nudix hydrolase family. Monomer. Mg(2+) serves as cofactor.

Inhibited by zinc, calcium or copper ions. Its function is as follows. Hydrolase that converts various nucleotide triphosphates (NTPs) to the corresponding nucleotide monophosphates and diphosphate, and nucleotide diphosphates to nucleotide monophosphates and inorganic phosphate. Has a marked preference for cytosine ribonucleoside 5'-diphosphate (CDP) and cytosine ribonucleoside 5'-triphosphate (CTP). Has lower activity towards the deoxyribose nucleotides dCDP and dCTP, and towards dGDP, TDP and UDP. This Deinococcus radiodurans (strain ATCC 13939 / DSM 20539 / JCM 16871 / CCUG 27074 / LMG 4051 / NBRC 15346 / NCIMB 9279 / VKM B-1422 / R1) protein is Nudix hydrolase DR_0079.